Here is a 635-residue protein sequence, read N- to C-terminus: S-type anion channel SLAH3 (635 aa).

At 1-253 (MEEKPNYVIQ…IVLPNDKKWP (253 aa)) the chain is on the cytoplasmic side. Residues 102–121 (SDPTTSLSSENHKNSGSTGK) show a composition bias toward polar residues. Residues 102–173 (SDPTTSLSSE…SGHHQNQNQA (72 aa)) are disordered. The span at 153 to 165 (NHHHHLHRQHQSG) shows a compositional bias: basic residues. S189 is subject to Phosphoserine. The disordered stretch occupies residues 193 to 217 (ERQFTRKPASVEPEAPNRNNQNLNT). A helical membrane pass occupies residues 254–276 (FLLRYPISTFGMCLGVSSQAIMW). At 277 to 299 (KTLATAEPTKFLHVPLWINQGLW) the chain is on the extracellular side. The helical transmembrane segment at 300–320 (FISVALILTIATIYLLKIILF) threads the bilayer. Residues 321–335 (FEAVRREYYHPIRIN) lie on the Cytoplasmic side of the membrane. The chain crosses the membrane as a helical span at residues 336–356 (FFFAPFISLLFLALGVPPSII). Residues 357–358 (TD) are Extracellular-facing. A helical transmembrane segment spans residues 359–379 (LPHFLWYLLMFPFICLELKIY). Topologically, residues 380 to 396 (GQWMSGGQRRLSRVANP) are cytoplasmic. Residues 397 to 417 (TNHLSVVGNFVGALLGASMGL) traverse the membrane as a helical segment. Topologically, residues 418 to 419 (RE) are extracellular. The chain crosses the membrane as a helical span at residues 420–440 (GPIFFYAVGMAHYLVLFVTLY). Residues 441-455 (QRLPTNETLPKDLHP) lie on the Cytoplasmic side of the membrane. The helical transmembrane segment at 456–476 (VFFLFVAAPSVASMAWAKVTG) threads the bilayer. Position 477 (S477) is a topological domain, extracellular. The helical transmembrane segment at 478–498 (FDYGSKVCYFIAIFLYFSLAV) threads the bilayer. Residues 499–504 (RINFFR) are Cytoplasmic-facing. A helical membrane pass occupies residues 505–525 (GIKFSLSWWAYTFPMTGAAIA). Residues 526–541 (TIRYATVVKSTMTQIM) are Extracellular-facing. Residues 542–562 (CVVLCAIATLVVFALLVTTII) form a helical membrane-spanning segment. Topologically, residues 563-635 (HAFVLRDLFP…NGKTQESDSS (73 aa)) are cytoplasmic. The disordered stretch occupies residues 611 to 635 (FTDSDSSQSNDVEACNGKTQESDSS). Polar residues predominate over residues 614 to 635 (SDSSQSNDVEACNGKTQESDSS).

This sequence belongs to the SLAC1 S-type anion channel family. As to quaternary structure, homotrimer. Interacts with KAT1. As to expression, expressed in the whole plant, escpecially in vascular systems.

It is found in the cell membrane. In terms of biological role, slow, weak voltage-dependent S-type anion efflux channel involved in maintenance of anion homeostasis. Binds to the highly selective inward-rectifying potassium channel KAT1 and inhibits its activity. Functions as an essential negative regulator of inward potassium channels in guard cells. Essential for the efficient stomatal closure and opening in guard cells. The protein is S-type anion channel SLAH3 (SLAH3) of Arabidopsis thaliana (Mouse-ear cress).